A 314-amino-acid polypeptide reads, in one-letter code: MLRIYAPASSANISVGFDTLGAAISPIDGSLLGDVVQIEDIPAGFELESAGYFVRKLPKEPQKNIVYQAYVLFSERLKLRNGHVKPLRLTLEKNMPIGSGLGSSACSIVAALVALNMFHNEPFSKMELLEMMGELEGRISGSIHYDNVAPCYLGGVQLMVQSLGNICQQLPFFDSWYWVLAYPGIEVSTAEARAILPKSYTRQDVIAHGRHLGSFVHACHTQQDVLAALMMKDVIAEPYRESLLPNFAEVKQASRDLGALATGISGSGPTIFSIAPDLAVATKLANYLENHYLQNNEGFVHICKVDNQGTRALG.

Residue Pro96–Cys106 participates in ATP binding.

This sequence belongs to the GHMP kinase family. Homoserine kinase subfamily.

The protein localises to the cytoplasm. It catalyses the reaction L-homoserine + ATP = O-phospho-L-homoserine + ADP + H(+). It functions in the pathway amino-acid biosynthesis; L-threonine biosynthesis; L-threonine from L-aspartate: step 4/5. In terms of biological role, catalyzes the ATP-dependent phosphorylation of L-homoserine to L-homoserine phosphate. This Mannheimia succiniciproducens (strain KCTC 0769BP / MBEL55E) protein is Homoserine kinase.